Consider the following 219-residue polypeptide: MSKATPRRRRWRIGELAEATGVTVRTLHHYEHTGLLAASERTDGGHRMYDRESVQRVHQIRALRELGFSLHEIRKAMEGTTSLIDLLRKHLERIELQVARATLLRDRLRDMTTGSEIQVSVDELPATLDAMSKVQTRSQTSRCTCKLAIEREERWRRIRDELRDCMDRGEHPCGERAKAVAVAARLLISEIAGADSRVSTILKVLARLSAPRSLAGWDP.

In terms of domain architecture, HTH merR-type spans 10–79 (RWRIGELAEA…LHEIRKAMEG (70 aa)). A DNA-binding region (H-T-H motif) is located at residues 13–32 (IGELAEATGVTVRTLHHYEH).

Involved in genotype-specific nodulation of soybeans. In Bradyrhizobium elkanii, this protein is Nodulation protein NolA (nolA).